A 232-amino-acid polypeptide reads, in one-letter code: Phosphoribosylformylglycinamidine synthase subunit PurQ (232 aa).

The region spanning 2–232 (KIAILQFGGT…SMVDYITENF (231 aa)) is the Glutamine amidotransferase type-1 domain. The active-site Nucleophile is cysteine 86. Catalysis depends on residues histidine 203 and glutamate 205.

As to quaternary structure, part of the FGAM synthase complex composed of 1 PurL, 1 PurQ and 2 PurS subunits.

The protein localises to the cytoplasm. It carries out the reaction N(2)-formyl-N(1)-(5-phospho-beta-D-ribosyl)glycinamide + L-glutamine + ATP + H2O = 2-formamido-N(1)-(5-O-phospho-beta-D-ribosyl)acetamidine + L-glutamate + ADP + phosphate + H(+). The enzyme catalyses L-glutamine + H2O = L-glutamate + NH4(+). It participates in purine metabolism; IMP biosynthesis via de novo pathway; 5-amino-1-(5-phospho-D-ribosyl)imidazole from N(2)-formyl-N(1)-(5-phospho-D-ribosyl)glycinamide: step 1/2. In terms of biological role, part of the phosphoribosylformylglycinamidine synthase complex involved in the purines biosynthetic pathway. Catalyzes the ATP-dependent conversion of formylglycinamide ribonucleotide (FGAR) and glutamine to yield formylglycinamidine ribonucleotide (FGAM) and glutamate. The FGAM synthase complex is composed of three subunits. PurQ produces an ammonia molecule by converting glutamine to glutamate. PurL transfers the ammonia molecule to FGAR to form FGAM in an ATP-dependent manner. PurS interacts with PurQ and PurL and is thought to assist in the transfer of the ammonia molecule from PurQ to PurL. In Methanosarcina barkeri (strain Fusaro / DSM 804), this protein is Phosphoribosylformylglycinamidine synthase subunit PurQ.